A 147-amino-acid polypeptide reads, in one-letter code: Protein-export protein SecB (147 aa).

It belongs to the SecB family. In terms of assembly, homotetramer, a dimer of dimers. One homotetramer interacts with 1 SecA dimer.

The protein resides in the cytoplasm. In terms of biological role, one of the proteins required for the normal export of preproteins out of the cell cytoplasm. It is a molecular chaperone that binds to a subset of precursor proteins, maintaining them in a translocation-competent state. It also specifically binds to its receptor SecA. In Neisseria meningitidis serogroup C (strain 053442), this protein is Protein-export protein SecB.